Reading from the N-terminus, the 100-residue chain is Urease subunit gamma (100 aa).

The protein belongs to the urease gamma subunit family. In terms of assembly, heterotrimer of UreA (gamma), UreB (beta) and UreC (alpha) subunits. Three heterotrimers associate to form the active enzyme.

The protein resides in the cytoplasm. The enzyme catalyses urea + 2 H2O + H(+) = hydrogencarbonate + 2 NH4(+). It functions in the pathway nitrogen metabolism; urea degradation; CO(2) and NH(3) from urea (urease route): step 1/1. This chain is Urease subunit gamma, found in Synechococcus sp. (strain CC9605).